A 640-amino-acid polypeptide reads, in one-letter code: Pleckstrin homology-like domain family B member 3 (640 aa).

5 disordered regions span residues 1–100 (MGTR…AARR), 162–189 (LEQQ…ERDR), 241–262 (LERE…VPDP), 387–412 (GLQR…RPLS), and 476–504 (REGT…PHPP). Residues 76 to 90 (PPIAMAATPPASTSS) are compositionally biased toward low complexity. Positions 104-327 (QQLEALTRVA…ERSRLLELNC (224 aa)) form a coiled coil. Residues 170-189 (QRGRQQREQEQRRLSQERDR) are compositionally biased toward basic and acidic residues. The stretch at 454–481 (DIAHMERLLQQAMAERERLLKAREGTRR) forms a coiled coil. Over residues 495–504 (TAPPTPPHPP) the composition is skewed to pro residues. Residues 532–635 (GCCCRGPLVK…WMDVIVTAAD (104 aa)) enclose the PH domain.

In Homo sapiens (Human), this protein is Pleckstrin homology-like domain family B member 3 (PHLDB3).